The primary structure comprises 349 residues: N-acetyl-gamma-glutamyl-phosphate reductase (349 aa).

Cys-152 is a catalytic residue.

It belongs to the NAGSA dehydrogenase family. Type 1 subfamily.

The protein resides in the cytoplasm. The catalysed reaction is N-acetyl-L-glutamate 5-semialdehyde + phosphate + NADP(+) = N-acetyl-L-glutamyl 5-phosphate + NADPH + H(+). The protein operates within amino-acid biosynthesis; L-arginine biosynthesis; N(2)-acetyl-L-ornithine from L-glutamate: step 3/4. Catalyzes the NADPH-dependent reduction of N-acetyl-5-glutamyl phosphate to yield N-acetyl-L-glutamate 5-semialdehyde. This Clavibacter sepedonicus (Clavibacter michiganensis subsp. sepedonicus) protein is N-acetyl-gamma-glutamyl-phosphate reductase.